The following is a 235-amino-acid chain: Large ribosomal subunit protein bL25 (235 aa).

The disordered stretch occupies residues 201-235 (PVAEAKGKGKAAKPAATAKPAAAAAKPAAKPKAKK). Residues 212-228 (AKPAATAKPAAAAAKPA) show a composition bias toward low complexity.

It belongs to the bacterial ribosomal protein bL25 family. CTC subfamily. As to quaternary structure, part of the 50S ribosomal subunit; part of the 5S rRNA/L5/L18/L25 subcomplex. Contacts the 5S rRNA. Binds to the 5S rRNA independently of L5 and L18.

Its function is as follows. This is one of the proteins that binds to the 5S RNA in the ribosome where it forms part of the central protuberance. The chain is Large ribosomal subunit protein bL25 from Verminephrobacter eiseniae (strain EF01-2).